The sequence spans 156 residues: ATP synthase subunit b (156 aa).

A helical transmembrane segment spans residues Leu7–Pro27.

This sequence belongs to the ATPase B chain family. As to quaternary structure, F-type ATPases have 2 components, F(1) - the catalytic core - and F(0) - the membrane proton channel. F(1) has five subunits: alpha(3), beta(3), gamma(1), delta(1), epsilon(1). F(0) has three main subunits: a(1), b(2) and c(10-14). The alpha and beta chains form an alternating ring which encloses part of the gamma chain. F(1) is attached to F(0) by a central stalk formed by the gamma and epsilon chains, while a peripheral stalk is formed by the delta and b chains.

Its subcellular location is the cell inner membrane. In terms of biological role, f(1)F(0) ATP synthase produces ATP from ADP in the presence of a proton or sodium gradient. F-type ATPases consist of two structural domains, F(1) containing the extramembraneous catalytic core and F(0) containing the membrane proton channel, linked together by a central stalk and a peripheral stalk. During catalysis, ATP synthesis in the catalytic domain of F(1) is coupled via a rotary mechanism of the central stalk subunits to proton translocation. Component of the F(0) channel, it forms part of the peripheral stalk, linking F(1) to F(0). This is ATP synthase subunit b from Polynucleobacter necessarius subsp. necessarius (strain STIR1).